A 175-amino-acid chain; its full sequence is Bcl-2-related protein A1 (175 aa).

Belongs to the Bcl-2 family. In terms of assembly, interacts directly with BCL2L11/BIM, BAK1, BID, BMF and BBC3. Interacts directly with PMAIP1. Interacts with BOP. Interacts with ING4. Interacts with UBQLN4.

It is found in the cytoplasm. Retards apoptosis induced by IL-3 deprivation. May function in the response of hemopoietic cells to external signals and in maintaining endothelial survival during infection. Can inhibit apoptosis induced by serum starvation in the mammary epithelial cell line HC11. The protein is Bcl-2-related protein A1 (BCL2A1) of Bos taurus (Bovine).